The following is a 166-amino-acid chain: Interferon gamma (166 aa).

Positions 1-23 (MKYTSYILAFQLCIVLGSLGCYC) are cleaved as a signal peptide. Gln-24 carries the pyrrolidone carboxylic acid modification. The N-linked (GlcNAc...) asparagine glycan is linked to Asn-48. Residue Asn-120 is glycosylated (N-linked (GlcNAc...) asparagine; in dimeric form). The tract at residues 147–166 (AKTGKRKRSQMLFRGRRASQ) is disordered. A compositionally biased stretch (basic residues) spans 149 to 166 (TGKRKRSQMLFRGRRASQ). Positions 162–166 (RRASQ) are excised as a propeptide.

It belongs to the type II (or gamma) interferon family. Homodimer. Interacts with IFNGR1 (via extracellular domain); this interaction promotes IFNGR1 dimerization. In terms of processing, proteolytic processing produces C-terminal heterogeneity, with proteins ending alternatively at Gly-150, Met-157 or Gly-161. Released primarily from activated T lymphocytes.

Its subcellular location is the secreted. Type II interferon produced by immune cells such as T-cells and NK cells that plays crucial roles in antimicrobial, antiviral, and antitumor responses by activating effector immune cells and enhancing antigen presentation. Primarily signals through the JAK-STAT pathway after interaction with its receptor IFNGR1 to affect gene regulation. Upon IFNG binding, IFNGR1 intracellular domain opens out to allow association of downstream signaling components JAK2, JAK1 and STAT1, leading to STAT1 activation, nuclear translocation and transcription of IFNG-regulated genes. Many of the induced genes are transcription factors such as IRF1 that are able to further drive regulation of a next wave of transcription. Plays a role in class I antigen presentation pathway by inducing a replacement of catalytic proteasome subunits with immunoproteasome subunits. In turn, increases the quantity, quality, and repertoire of peptides for class I MHC loading. Increases the efficiency of peptide generation also by inducing the expression of activator PA28 that associates with the proteasome and alters its proteolytic cleavage preference. Up-regulates as well MHC II complexes on the cell surface by promoting expression of several key molecules such as cathepsins B/CTSB, H/CTSH, and L/CTSL. Participates in the regulation of hematopoietic stem cells during development and under homeostatic conditions by affecting their development, quiescence, and differentiation. The protein is Interferon gamma (IFNG) of Homo sapiens (Human).